The chain runs to 259 residues: MSSQSPKRMYGTGNNFVIIDSRSINNLNWNYREIANQNGCDQIIVITNSSAADCFMHIYNADGGEVEMCGNAARCVGYLIMSEKSTEYATIELVNKRILECFKVGGRSIKVNMGKPLFKWHEIPLSAKCDPLHLPIELEMLKDPVAVNIGNPHMVFFVDNISEIPLQSLGPKLEKHTLFPKKVNVNIAQVEKSGEISLRVWERGTGITASCGSAACAALIASVLRGYLITRQTSVNLPGGKLLIEWPDNIFMTGDIGFL.

Asn14, Gln42, and Asn60 together coordinate substrate. The active-site Proton donor is Cys69. Substrate is bound by residues 70–71 (GN), Asn151, Asn184, and 202–203 (ER). Cys211 functions as the Proton acceptor in the catalytic mechanism. Position 212 to 213 (212 to 213 (GS)) interacts with substrate.

Belongs to the diaminopimelate epimerase family. In terms of assembly, homodimer.

Its subcellular location is the cytoplasm. It carries out the reaction (2S,6S)-2,6-diaminopimelate = meso-2,6-diaminopimelate. It participates in amino-acid biosynthesis; L-lysine biosynthesis via DAP pathway; DL-2,6-diaminopimelate from LL-2,6-diaminopimelate: step 1/1. Its function is as follows. Catalyzes the stereoinversion of LL-2,6-diaminopimelate (L,L-DAP) to meso-diaminopimelate (meso-DAP), a precursor of L-lysine and an essential component of the bacterial peptidoglycan. This Wolbachia sp. subsp. Brugia malayi (strain TRS) protein is Diaminopimelate epimerase.